A 212-amino-acid chain; its full sequence is Pyridoxine/pyridoxamine 5'-phosphate oxidase (212 aa).

Substrate is bound by residues 7 to 10 (RRQY) and K65. FMN contacts are provided by residues 60 to 65 (RIVLLK), 75 to 76 (FT), R81, K82, and Q104. Residues Y122, R126, and S130 each coordinate substrate. FMN-binding positions include 139-140 (QS) and W184. A substrate-binding site is contributed by 190–192 (RLH). Residue R194 coordinates FMN.

Belongs to the pyridoxamine 5'-phosphate oxidase family. As to quaternary structure, homodimer. The cofactor is FMN.

The catalysed reaction is pyridoxamine 5'-phosphate + O2 + H2O = pyridoxal 5'-phosphate + H2O2 + NH4(+). It carries out the reaction pyridoxine 5'-phosphate + O2 = pyridoxal 5'-phosphate + H2O2. It functions in the pathway cofactor metabolism; pyridoxal 5'-phosphate salvage; pyridoxal 5'-phosphate from pyridoxamine 5'-phosphate: step 1/1. The protein operates within cofactor metabolism; pyridoxal 5'-phosphate salvage; pyridoxal 5'-phosphate from pyridoxine 5'-phosphate: step 1/1. In terms of biological role, catalyzes the oxidation of either pyridoxine 5'-phosphate (PNP) or pyridoxamine 5'-phosphate (PMP) into pyridoxal 5'-phosphate (PLP). The chain is Pyridoxine/pyridoxamine 5'-phosphate oxidase from Alteromonas mediterranea (strain DSM 17117 / CIP 110805 / LMG 28347 / Deep ecotype).